The chain runs to 298 residues: Zinc-alpha-2-glycoprotein (298 aa).

Residues 1 to 20 (MVRMVPVLLSLLLLLGPAVP) form the signal peptide. At Gln-21 the chain carries Pyrrolidone carboxylic acid. The N-linked (GlcNAc...) (complex) asparagine glycan is linked to Asn-109. N-linked (GlcNAc...) asparagine glycosylation is present at Asn-112. Cystine bridges form between Cys-123–Cys-186 and Cys-225–Cys-280. The N-linked (GlcNAc...) (complex) asparagine glycan is linked to Asn-128. An Ig-like C1-type domain is found at 207–292 (PSVVVTSHQA…QHSSLAQPLV (86 aa)). A glycan (N-linked (GlcNAc...) asparagine) is linked at Asn-259.

Belongs to the MHC class I family. Interacts with PIP. Post-translationally, N-glycosylated. N-glycan at Asn-128: Hex5HexNAc4. As to expression, blood plasma, seminal plasma, urine, saliva, sweat, epithelial cells of various human glands, liver.

It localises to the secreted. In terms of biological role, stimulates lipid degradation in adipocytes and causes the extensive fat losses associated with some advanced cancers. May bind polyunsaturated fatty acids. The polypeptide is Zinc-alpha-2-glycoprotein (AZGP1) (Homo sapiens (Human)).